Consider the following 257-residue polypeptide: Beta-fibrinogenase (257 aa).

A signal peptide spans Met-1–Ala-18. Residues Gln-19–Leu-24 constitute a propeptide that is removed on maturation. Residues Val-25–Ala-248 enclose the Peptidase S1 domain. 6 cysteine pairs are disulfide-bonded: Cys-31–Cys-162, Cys-49–Cys-65, Cys-97–Cys-255, Cys-141–Cys-209, Cys-173–Cys-188, and Cys-199–Cys-224. Residue Asn-44 is glycosylated (N-linked (GlcNAc...) asparagine). His-64 functions as the Charge relay system in the catalytic mechanism. N-linked (GlcNAc...) asparagine glycosylation is found at Asn-78 and Asn-102. The active-site Charge relay system is Asp-109. N-linked (GlcNAc...) asparagine glycosylation is found at Asn-153 and Asn-169. Ser-203 acts as the Charge relay system in catalysis. The N-linked (GlcNAc...) asparagine glycan is linked to Asn-250.

In terms of assembly, monomer. In terms of processing, glycosylated. Contains 23.0% of hexoses, 8.3% of hexosamines and 1.0% of sialic acids. Expressed by the venom gland.

It localises to the secreted. Its activity is regulated as follows. Inhibited by diisopropylfluorophosphate (DFP) and PMSF. Its function is as follows. Snake venom serine protease that has fibrinogenolytic activities by hydrolyzing the beta chain of fibrinogen (FGB). Typical arginine esterase which hydrolyzes esters and amides of arginine. This Macrovipera lebetinus (Levantine viper) protein is Beta-fibrinogenase.